Reading from the N-terminus, the 629-residue chain is Coiled-coil domain-containing protein 93 (629 aa).

Residues 1–23 are disordered; the sequence is MGLPKGPEGQGLPEVETREDEEQ. The segment at 1-428 is sufficient for interaction with CCDC22; sequence MGLPKGPEGQ…ETLKAERAPG (428 aa). 2 coiled-coil regions span residues 231–430 and 558–599; these read LSAA…PGEK and LRQM…LLEK. Phosphoserine is present on residues Ser298, Ser301, and Ser305. Positions 446–629 are sufficient for interaction with WASHC2C; that stretch reads THNEDLDRRY…LLSKIKAKAS (184 aa).

Belongs to the CCDC93 family. As to quaternary structure, component of the commander complex consisting of the CCC subcomplex and the retriever subcomplex. Component of the CCC (COMMD/CCDC22/CCDC93) subcomplex consisting of COMMD1, COMMD2, COMMD3, COMMD4, COMMD5, COMMD6, COMMD7, COMMD8, COMMD9, COMMD10, CCDC22 and CCDC93. Forms a coiled-coil heterodimer with CCDC22; this heterodimer interacts with the guanine nucleotide exchange factor DENND10; the interaction is direct. Interacts with WASHC1. Interacts directly with WASHC2C. Interacts with SNX17 and SNX31.

The protein resides in the early endosome. Its function is as follows. Component of the commander complex that is essential for endosomal recycling of transmembrane cargos; the commander complex is composed of composed of the CCC subcomplex and the retriever subcomplex. Component of the CCC complex, which is involved in the regulation of endosomal recycling of surface proteins, including integrins, signaling receptor and channels. The CCC complex associates with SNX17, retriever and WASH complexes to prevent lysosomal degradation and promote cell surface recycling of numerous cargos such as integrins ITGA5:ITGB1. Involved in copper-dependent ATP7A trafficking between the trans-Golgi network and vesicles in the cell periphery; the function is proposed to depend on its association within the CCC complex and cooperation with the WASH complex on early endosomes and is dependent on its interaction with WASHC2C. This Mus musculus (Mouse) protein is Coiled-coil domain-containing protein 93 (Ccdc93).